The primary structure comprises 1530 residues: Glutamate-rich protein 3 (1530 aa).

Disordered stretches follow at residues 165–187, 408–429, 475–661, 673–724, 773–870, 923–1146, 1167–1334, 1360–1383, and 1425–1530; these read RLQP…RSRS, SLPK…KAEG, MTSK…PMPI, TEKG…GLEE, EAME…AVGL, REAA…LLGE, LENI…GMGG, LAGS…DVAE, and YTTE…NVQV. Composition is skewed to basic and acidic residues over residues 415 to 429, 531 to 545, and 552 to 562; these read EKST…KAEG, LDDK…KESE, and PDARDNVKDEN. Over residues 563 to 574 the composition is skewed to acidic residues; it reads DGCSESELEEDK. The segment covering 581–592 has biased composition (low complexity); sequence SSTSSRSHPYSS. The span at 600 to 616 shows a compositional bias: basic and acidic residues; the sequence is VGDREAHTDSSTDESAR. The span at 638–647 shows a compositional bias: acidic residues; that stretch reads ESLEIEIEDQ. Basic and acidic residues-rich tracts occupy residues 684-717 and 773-787; these read LSEK…DKKA and EAME…RDAD. Over residues 834 to 845 the composition is skewed to low complexity; sequence GIERGAEGAAEA. Positions 943–958 are enriched in acidic residues; it reads GESEEEASIDLEDTGP. Basic and acidic residues-rich tracts occupy residues 979–992, 1039–1116, and 1173–1212; these read EPAK…RTET, EANR…EETK, and LRKE…RQDG. The segment covering 1213–1225 has biased composition (low complexity); sequence EGALAAPEAEPAG. Acidic residues predominate over residues 1289-1300; the sequence is AVDEDPEEEEDK. Basic and acidic residues-rich tracts occupy residues 1464 to 1487 and 1502 to 1511; these read GRQE…RELS and DFTETREKQQ. Polar residues predominate over residues 1517–1530; the sequence is ESETADVSPNNVQV.

Interacts with CLTC/clathrin heavy chain 1, AP2A2/AP-2 complex subunit alpha-2, and PIK3C2A/phosphatidylinositol 4-phosphate 3-kinase C2 domain-containing subunit alpha. As to expression, expressed in dopaminergic and serotoninergic neurons.

It localises to the cell projection. Its subcellular location is the cilium. It is found in the cytoplasm. Functionally, component of the primary cilium that controls cilium formation and length. May function within retrograde intraflagellar transport (IFT)-associated pathways to remove signaling proteins from primary cilia. Also involved in neuronal vesicle biogenesis and neurotransmitter vesicular function. This is Glutamate-rich protein 3 from Homo sapiens (Human).